The following is a 374-amino-acid chain: Ribosomal RNA large subunit methyltransferase G (374 aa).

It belongs to the methyltransferase superfamily. RlmG family.

The protein resides in the cytoplasm. The catalysed reaction is guanosine(1835) in 23S rRNA + S-adenosyl-L-methionine = N(2)-methylguanosine(1835) in 23S rRNA + S-adenosyl-L-homocysteine + H(+). Its function is as follows. Specifically methylates the guanine in position 1835 (m2G1835) of 23S rRNA. In Pseudomonas putida (strain W619), this protein is Ribosomal RNA large subunit methyltransferase G.